A 187-amino-acid polypeptide reads, in one-letter code: High-affinity copper transporter ctrA2 (187 aa).

Helical transmembrane passes span 44–64 (YAGT…LVAF) and 137–157 (AAIF…VMTM).

Belongs to the copper transporter (Ctr) (TC 1.A.56) family. SLC31A subfamily.

Its subcellular location is the cell membrane. The enzyme catalyses Cu(2+)(in) = Cu(2+)(out). In terms of biological role, high-affinity copper transporter of plasma membrane that mediates copper uptake under low copper conditions. The mechanism driving the transmembrane transport of copper has still to be determined. Acts as a potential virulence factor. The sequence is that of High-affinity copper transporter ctrA2 from Aspergillus fumigatus (strain ATCC MYA-4609 / CBS 101355 / FGSC A1100 / Af293) (Neosartorya fumigata).